The chain runs to 478 residues: MTLRIYDTAARQLRDFEPIREGHASIYLCGATVQSIPHIGHVRSGVAFDILRNWLEAKGLDVAFVRNVTDIDDKILTKAAENDRPWWEWAATHERAFNWAYDQLGVTPPSIEPRATGHVPQMIEYMQRIIDNGHGYAADGNVYAQPATIDNYGFLSGQKLDEMDQGESAGTGKRDPRDFTMWKAAKPGEPAWDTPWGRGRPGWHIECSAMATTYLGSEFDIHCGGLDLQFPHHENEAAQATAAGDGFARYWMHNGWVTMSGEKMSKSLGNVLSIPNVLKLVRPVELRYYLGSAHYRSMLEYSEAALGEAAAGYRRIEKFLVRAIEYVTGETAVDPQALPVGEMPAQFAEKMDDDLAVPQSLAVIHDVVREGNKLLDAKPTDEAKQQVKEIAGQVRAMAAVLGVDPLSEAWLESTKAAAGGSDVAMGALDVLVKAELERRAEARAAKDWATADEVRDRLAEAGIEVTDTADGAKWSLKG.

Cys29 is a binding site for Zn(2+). A 'HIGH' region motif is present at residues 31 to 41; sequence ATVQSIPHIGH. Residues Cys207, His232, and Glu236 each coordinate Zn(2+). A 'KMSKS' region motif is present at residues 263 to 267; the sequence is KMSKS. Lys266 is an ATP binding site.

It belongs to the class-I aminoacyl-tRNA synthetase family. In terms of assembly, monomer. The cofactor is Zn(2+).

It is found in the cytoplasm. It catalyses the reaction tRNA(Cys) + L-cysteine + ATP = L-cysteinyl-tRNA(Cys) + AMP + diphosphate. This chain is Cysteine--tRNA ligase, found in Corynebacterium jeikeium (strain K411).